A 576-amino-acid polypeptide reads, in one-letter code: Protein NRT1/ PTR FAMILY 2.12 (576 aa).

Helical transmembrane passes span 58 to 78, 89 to 109, 130 to 150, 176 to 196, 203 to 223, 329 to 349, 364 to 384, 406 to 426, 441 to 461, 475 to 495, and 522 to 542; these read FNVY…GALI, IAYA…TACL, KLQL…SGGI, FFNW…TVVV, WVIG…LFFV, VWSA…FMVF, IPAA…VPIY, MGIG…VEGV, WLAL…IGLI, IANS…SLLV, and YFYY…WYCA.

Belongs to the major facilitator superfamily. Proton-dependent oligopeptide transporter (POT/PTR) (TC 2.A.17) family. In terms of tissue distribution, expressed in flowers and siliques. Expressed in vascular bundle of the siliques and in funiculus.

It localises to the cell membrane. Functionally, low-affinity proton-dependent nitrate transporter. Not involved in dipeptides transport. Involved in delivering nitrate for seed development. The sequence is that of Protein NRT1/ PTR FAMILY 2.12 (NPF2.12) from Arabidopsis thaliana (Mouse-ear cress).